Consider the following 530-residue polypeptide: MQLKSTVHFLSLLAYTAAHGFVSDISVGDNWYVGSNPFQDAWKQPSPERVVWSFFDGGNGPVADLTTKNIVCNTNAQAAKLYIDSVEAGSQVTFYWTSWPSGHLGPIMTYLAKCNGDCRDNDPSSLSYFKIDEKGLENGQWATQELIANNNSWTVTLPSDISAGNYLIRHELLALQESSRRLGAQFYPMCTNLKITGGGSANPEGVTFPGAYKADDPGILVDIFNGISDYVIPGPPVYGSGSSSSQNSVESSAKKDEPAGVETPVSTTSSKKDSISTSAESVVSTFSSEPVYSSLVESSSALDAPKSTDAVKSVEAKETTKVEEVSSSALESTLNQLTQQATVTSTLYSSASPSSSPVLSSSKPASTSNPEKLSSAPVTITKTAVATEVYESRDNGEIVSVSIDSKHLPTSNAAAAAPTADNAPAHENGLYVFTVTQFATTTTYVTRAPRTTAVTVFNENVVTQVIVRTEWTQNTPVTVYARPTAAVKAATGNGASAAAEPNTGTGSGGTTPSYVKRYMEKAKDLVKRMF.

Residues 1–18 (MQLKSTVHFLSLLAYTAA) form the signal peptide. Cu(2+) contacts are provided by His19 and His103. 2 disulfide bridges follow: Cys72–Cys190 and Cys114–Cys118. Residue Asn150 is glycosylated (N-linked (GlcNAc...) asparagine). Gln185 contributes to the O2 binding site. A Cu(2+)-binding site is contributed by Tyr187. Low complexity predominate over residues 238-251 (YGSGSSSSQNSVES). 4 disordered regions span residues 238–279 (YGSG…STSA), 297–329 (ESSS…SSSA), 348–375 (YSSA…KLSS), and 492–512 (GNGA…GTTP). Residues 312-324 (KSVEAKETTKVEE) show a composition bias toward basic and acidic residues. Positions 348-368 (YSSASPSSSPVLSSSKPASTS) are enriched in low complexity.

It belongs to the polysaccharide monooxygenase AA9 family. Cu(2+) serves as cofactor.

Its subcellular location is the secreted. The enzyme catalyses [(1-&gt;4)-beta-D-glucosyl]n+m + reduced acceptor + O2 = 4-dehydro-beta-D-glucosyl-[(1-&gt;4)-beta-D-glucosyl]n-1 + [(1-&gt;4)-beta-D-glucosyl]m + acceptor + H2O.. Functionally, lytic polysaccharide monooxygenase (LPMO) that depolymerizes polysaccharides via the oxidation of scissile alpha- or beta-(1-4)-glycosidic bonds, yielding C1 or C4 oxidation products. Catalysis by LPMOs requires the reduction of the active-site copper from Cu(II) to Cu(I) by a reducing agent and H(2)O(2) or O(2) as a cosubstrate. Amorphous cellulose is not a suitable substrate for LPMO9C, which may act at the surface of cellulose microfibrils without any release of soluble products. In Geotrichum candidum (Oospora lactis), this protein is AA9 family lytic polysaccharide monooxygenase C.